The primary structure comprises 122 residues: Methylglyoxal synthase (122 aa).

Residues 1–122 form the MGS-like domain; that stretch reads MRIALIAHDK…DLFIKHLKGK (122 aa). Residues His8, Lys12, 34–37, and 54–55 each bind substrate; these read TGTT and SG. Residue Asp60 is the Proton donor/acceptor of the active site. His87 is a binding site for substrate.

It belongs to the methylglyoxal synthase family.

It catalyses the reaction dihydroxyacetone phosphate = methylglyoxal + phosphate. Catalyzes the formation of methylglyoxal from dihydroxyacetone phosphate. This Acholeplasma laidlawii (strain PG-8A) protein is Methylglyoxal synthase.